We begin with the raw amino-acid sequence, 482 residues long: Spore germination protein A1 (482 aa).

The next 6 helical transmembrane spans lie at Val242–Leu262, Phe284–His304, Glu321–Leu341, Pro351–Ala371, Leu373–Pro393, and Phe406–Val426.

This sequence belongs to the GerABKA family.

It localises to the cell membrane. Forms a complex at the inner spore membrane which acts as a receptor for L-alanine, thus is involved in the stimulation of germination in response to alanine. Can stimulate germination in the absence of GerD and GerK gene products (fructose and glucose receptors, respectively), but the response is improved in their presence. The protein is Spore germination protein A1 (gerAA) of Bacillus subtilis (strain 168).